Here is a 242-residue protein sequence, read N- to C-terminus: tRNA (guanine-N(1)-)-methyltransferase (242 aa).

S-adenosyl-L-methionine is bound by residues G114 and 134 to 139; that span reads IGDFVL. A compositionally biased stretch (basic and acidic residues) spans 223 to 233; that stretch reads RRDLLPEHSKN. Residues 223 to 242 are disordered; that stretch reads RRDLLPEHSKNNPEQTNKLS.

This sequence belongs to the RNA methyltransferase TrmD family. Homodimer.

The protein resides in the cytoplasm. The enzyme catalyses guanosine(37) in tRNA + S-adenosyl-L-methionine = N(1)-methylguanosine(37) in tRNA + S-adenosyl-L-homocysteine + H(+). In terms of biological role, specifically methylates guanosine-37 in various tRNAs. The polypeptide is tRNA (guanine-N(1)-)-methyltransferase (Rhodopirellula baltica (strain DSM 10527 / NCIMB 13988 / SH1)).